Here is a 448-residue protein sequence, read N- to C-terminus: Probable alpha-galactosidase B (448 aa).

The N-terminal stretch at 1-23 is a signal peptide; it reads MSRFHLPLAAAVVLVSCLWSANA. 2 disulfides stabilise this stretch: cysteine 46-cysteine 78 and cysteine 128-cysteine 158. Aspartate 156 acts as the Nucleophile in catalysis. N-linked (GlcNAc...) asparagine glycans are attached at residues asparagine 163 and asparagine 181. Residue 226-230 participates in substrate binding; the sequence is EWGQA. Asparagine 237 carries N-linked (GlcNAc...) asparagine glycosylation. Catalysis depends on aspartate 248, which acts as the Proton donor.

The protein belongs to the glycosyl hydrolase 27 family.

It localises to the secreted. It catalyses the reaction Hydrolysis of terminal, non-reducing alpha-D-galactose residues in alpha-D-galactosides, including galactose oligosaccharides, galactomannans and galactolipids.. Its function is as follows. Hydrolyzes a variety of simple alpha-D-galactoside as well as more complex molecules such as oligosaccharides and polysaccharides. The chain is Probable alpha-galactosidase B (aglB) from Aspergillus clavatus (strain ATCC 1007 / CBS 513.65 / DSM 816 / NCTC 3887 / NRRL 1 / QM 1276 / 107).